Consider the following 502-residue polypeptide: Ubiquilin (502 aa).

A Ubiquitin-like domain is found at 8-83 (IKVHVKSPSN…VHLVIRNQAR (76 aa)). Residues 84–115 (PTPAPAAATPTASSAPSSNPTPSSQPNPTNNP) show a composition bias toward low complexity. A disordered region spans residues 84–136 (PTPAPAAATPTASSAPSSNPTPSSQPNPTNNPFAAMGGMGSPADILNNPDAMR). STI1 domains lie at 124–157 (SPADILNNPDAMRSVMDNPITQQLLGNPEFMRTI) and 161–200 (NPQFQALIERNPEVGHILNDPNVMRQTMEMIRNPNMFQEM). The segment covering 235–251 (SATNSLSGNPFASLRGD) has biased composition (polar residues). A disordered region spans residues 235–294 (SATNSLSGNPFASLRGDQSSEPRVDRAGQENNEALPNPWASNANQATNNQSNNRSADFNS). A compositionally biased stretch (basic and acidic residues) spans 252-262 (QSSEPRVDRAG). Low complexity predominate over residues 274–290 (ASNANQATNNQSNNRSA). 2 consecutive STI1 domains span residues 289-327 (SADFNSLLDSPGISSLMEQMMSNPSMQASMFSPEVINSI) and 351-387 (NPQISEGIRRSFPQMLNMMSDPSVMEAMRNPRVSEAF). Residues 455–501 (PVNPEQTYASQLEQLQSMGFSDRARNVAALTATFGDLNAAVERLLNS) enclose the UBA domain.

As to expression, expressed in the pharynx, hypodermis, intestine and head neurons. Upon ER stress, expressed predominantly in pharyngeal muscle, hypodermis and intestine.

In terms of biological role, may play a role in the ER-associated protein degradation pathway (ERAD) possibly via its interaction with ER-localized proteins ubxn-4 and cdc-48.1 and/or cdc48.2, providing a link between the polyubiquitinated ERAD substrates and the proteasome. Also plays an important role in the regulation of other protein degradation mechanisms and pathways including ubiquitin-proteasome system (UPS) and autophagy. Mediates the proteasomal targeting of misfolded or accumulated proteins for degradation by binding (via UBA domain) to their polyubiquitin chains and by interacting (via ubiquitin-like domain) with the subunits of the proteasome. Collaborates with POST (F36D4.5) in the export of ubiquitinated proteins from the nucleus to the cytoplasm. Also acts as a regulator of DNA repair by inhibiting homologous recombination repair, thereby redirecting double-strand break repair toward non-homologous end joining (NHEJ). The sequence is that of Ubiquilin from Caenorhabditis elegans.